The chain runs to 1481 residues: Coiled-coil domain-containing protein 88B (1481 aa).

Coiled coils occupy residues 200–225 (ELVAEELEMQLRSLTGMMSRLARERD) and 258–491 (SHHL…GSQH). 3 disordered regions span residues 430–458 (ELQRSLEPPPGSPGEASLPGAAPSLQDEV), 494–731 (LEEQ…AIPE), and 1331–1481 (PRRE…SLSQ). The residue at position 441 (serine 441) is a Phosphoserine. Composition is skewed to polar residues over residues 542 to 557 (ASYSDITRSPKCSQAP) and 568 to 590 (QMVSQDPQTSDQALQESDPTVET). Phosphoserine is present on serine 649. The segment covering 660-695 (TLREPLKDQKALDRELELSKQQKETGRHEQRPKGLE) has biased composition (basic and acidic residues). Positions 731–1308 (EEQALRDEVA…KIMDQYRVLE (578 aa)) form a coiled coil. Phosphoserine occurs at positions 1353 and 1384. Polar residues predominate over residues 1371-1386 (TGSSSPAPMRRVQSSL). Residues 1453–1472 (LSEHEADDTREAFQEQKPEK) are compositionally biased toward basic and acidic residues.

The protein belongs to the CCDC88 family. Homodimer. Interacts with DOCK8. Interacts (via C-terminus) with intact microtubules. Interacts with dynein-dynactin motor complex. Interacts (via C-terminus) with HSPA5. As to expression, abundantly expressed in immune cells, including both CD4(+) and CD8(+) T-cells and in myeloid cells (at protein level). Expressed in endothelium (at protein level). Expressed specifically in spleen, bone marrow, lymph nodes and thymus. Expressed in liver and heart.

It is found in the membrane. It localises to the cytoplasm. The protein localises to the cytoskeleton. The protein resides in the microtubule organizing center. Its subcellular location is the endoplasmic reticulum. It is found in the golgi apparatus. Its function is as follows. Acts as a positive regulator of T-cell maturation and inflammatory function. Required for several functions of T-cells in both the CD4(+) and the CD8(+) compartments and this includes expression of cell surface markers of activation, proliferation, and cytokine production in response to specific or non-specific stimulation and during the course of infection with the mouse malaria parasite Plasmodium berghei. Enhances NK cell cytotoxicity by positively regulating polarization of microtubule-organizing center (MTOC) to cytotoxic synapse, lytic granule transport along microtubules, and dynein-mediated clustering to MTOC. Interacts with HSPA5 and stabilizes the interaction between HSPA5 and ERN1, leading to suppression of ERN1-induced JNK activation and endoplasmic reticulum stress-induced apoptosis. This is Coiled-coil domain-containing protein 88B (Ccdc88b) from Mus musculus (Mouse).